A 1300-amino-acid chain; its full sequence is Zinc finger protein 536 (1300 aa).

Disordered regions lie at residues 1–26 (MEEA…GPVL) and 47–77 (FPEL…GQPM). Positions 48-69 (PELHPRPNPEEKPPASLEEKAH) are enriched in basic and acidic residues. C2H2-type zinc fingers lie at residues 130–152 (YPCP…MRTH), 158–180 (FKCP…LRTH), 274–297 (FRCT…RILH), 300–323 (YKCT…EKAH), 345–367 (FRCE…MRKH), and 373–395 (HCCQ…MKVH). Disordered stretches follow at residues 584–604 (HSTK…LESS) and 650–739 (SRVH…QQPA). Basic and acidic residues predominate over residues 594-604 (LPSKLDPLESS). The segment at 631–653 (TECPDCGRVFRTYHQVVVHSRVH) adopts a C2H2-type 7 zinc-finger fold. Positions 657 to 674 (RKGEEDGLHVGLDERRGS) are enriched in basic and acidic residues. The span at 675-696 (GSDQESQSVSRSTTPGSSNVTE) shows a compositional bias: polar residues. 2 consecutive C2H2-type zinc fingers follow at residues 751 to 773 (KDCP…LRIH) and 779 to 801 (YKCP…LERH). The interval 802–826 (HRERQNGAGPLSGQPPNQDHKDEMS) is disordered. Serine 826 and serine 827 each carry phosphoserine. Polar residues predominate over residues 856–880 (SQQWTSGVLSSGDHSGQATGMSSEV). Disordered regions lie at residues 856–893 (SQQW…LPSK), 937–985 (KDKA…PDAA), and 1124–1260 (SGAS…SLDK). Composition is skewed to basic and acidic residues over residues 950 to 972 (HGVD…EKSQ) and 1133 to 1143 (KEPDGKAHSEE). Composition is skewed to acidic residues over residues 1160-1170 (DLSDIASSEDM) and 1178-1187 (NDEEDVETEP). Over residues 1194-1209 (LSALSKDSSSDGGDSL) the composition is skewed to low complexity.

The protein belongs to the krueppel C2H2-type zinc-finger protein family.

The protein resides in the nucleus. Its function is as follows. Transcriptional repressor that negatively regulates neuron differentiation by repressing retinoic acid-induced gene transcription. Binds and interrupts RARA from binding to retinoic acid response elements (RARE) composed of tandem 5'-AGGTCA-3' sites known as DR1-DR5. Recognizes and binds 2 copies of the core DNA sequence 5'-CCCCCA-3'. The protein is Zinc finger protein 536 (ZNF536) of Homo sapiens (Human).